The chain runs to 180 residues: Large ribosomal subunit protein uL5 (180 aa).

Belongs to the universal ribosomal protein uL5 family. Part of the 50S ribosomal subunit; part of the 5S rRNA/L5/L18/L25 subcomplex. Contacts the 5S rRNA and the P site tRNA. Forms a bridge to the 30S subunit in the 70S ribosome.

Functionally, this is one of the proteins that bind and probably mediate the attachment of the 5S RNA into the large ribosomal subunit, where it forms part of the central protuberance. In the 70S ribosome it contacts protein S13 of the 30S subunit (bridge B1b), connecting the 2 subunits; this bridge is implicated in subunit movement. Contacts the P site tRNA; the 5S rRNA and some of its associated proteins might help stabilize positioning of ribosome-bound tRNAs. In Lactobacillus delbrueckii subsp. bulgaricus (strain ATCC 11842 / DSM 20081 / BCRC 10696 / JCM 1002 / NBRC 13953 / NCIMB 11778 / NCTC 12712 / WDCM 00102 / Lb 14), this protein is Large ribosomal subunit protein uL5.